Here is a 646-residue protein sequence, read N- to C-terminus: MSSPDFKLKAEFKPKGSQLEAIAGLVKDLEKNPEKSKQTLLGVTGSGKTFTIANVIEKVQKPTLVIAHNKTLAAQLYNEFKEFFPENRVEYFVSYYDYYQPESYIPQKDQYIEKDAQINPKIEQMRLRATSAILSRRDVIIVASVSCIYGLGNPELFKEMGFELKVGEKIKRSDIIEKLVDIQYERNDMELVPGRFRVKGDTLDIIPGYQDDILRVEMFGDEIDRIYELDPKNMSKKHEIDSFYMYPAKHFVIPEEDKKNAINSILKELDEWLPNLDMLKSHRLKQKTLYDIEMIEETGSCKGIENYSRHFENRKEGEPAYCLLDYFPEDFLIVIDESHQTIPQIRGMYKGDRSRKQSLIDYGFRLPSAYDNRPLKFEEFKKYMNNVIFVSATPGEYELDNSNQVVEQIIRPTGLLDPEVEIRPIENQVEDIIKETEKMVEKGERVLITTLTKRLAEELTEYLAKRNVKARYLHSDIDTIERTEIIRNLRLGKFDCLVGINLLREGLDIPEVGFVGILDADKEGFLRNDKSLIQTIGRAARNANSKVVLYAGKMTDSIKKAVSETERRRKLQKEHNEKHNITPQTIVKPIREKVVDISDVKHIPVADIPNVIVELEAEMYEAAEALEFEKAIKIRDTIAKLKKKIK.

In terms of domain architecture, Helicase ATP-binding spans leucine 29–arginine 411. Glycine 42–threonine 49 is an ATP binding site. Residues tyrosine 95–isoleucine 118 carry the Beta-hairpin motif. The 163-residue stretch at glutamine 428–isoleucine 590 folds into the Helicase C-terminal domain. The UVR domain maps to proline 609–lysine 644.

Belongs to the UvrB family. As to quaternary structure, forms a heterotetramer with UvrA during the search for lesions. Interacts with UvrC in an incision complex.

The protein localises to the cytoplasm. Its function is as follows. The UvrABC repair system catalyzes the recognition and processing of DNA lesions. A damage recognition complex composed of 2 UvrA and 2 UvrB subunits scans DNA for abnormalities. Upon binding of the UvrA(2)B(2) complex to a putative damaged site, the DNA wraps around one UvrB monomer. DNA wrap is dependent on ATP binding by UvrB and probably causes local melting of the DNA helix, facilitating insertion of UvrB beta-hairpin between the DNA strands. Then UvrB probes one DNA strand for the presence of a lesion. If a lesion is found the UvrA subunits dissociate and the UvrB-DNA preincision complex is formed. This complex is subsequently bound by UvrC and the second UvrB is released. If no lesion is found, the DNA wraps around the other UvrB subunit that will check the other stand for damage. This Methanococcus maripaludis (strain DSM 14266 / JCM 13030 / NBRC 101832 / S2 / LL) protein is UvrABC system protein B.